We begin with the raw amino-acid sequence, 418 residues long: Voltage-gated ClC-type chloride channel ClcB (418 aa).

At 1 to 4 (MFRR) the chain is on the cytoplasmic side. The chain crosses the membrane as a helical span at residues 5-25 (LLIATVVGILAVFAVAGFRHA). Over 26-53 (MLLLEWLFLNNDSGSLVNAATNLSSWRR) the chain is Periplasmic. A helical transmembrane segment spans residues 54-74 (LLTPALGGLAAGLLLMGWQKF). Topologically, residues 75–145 (TQQRPHAPTD…QRFTPRQEWK (71 aa)) are cytoplasmic. Residues 146 to 166 (LWIACGAAAGMAAAYRAPLAG) form a helical membrane-spanning segment. At 167 to 172 (SLFIAE) the chain is on the periplasmic side. Residues 173–193 (VLFGTMMLASLGPVIISAIVA) form a helical membrane-spanning segment. At 194 to 221 (WLVSNLINHSDALLYNVQLSVTVQARDY) the chain is on the cytoplasmic side. The helical transmembrane segment at 222-242 (ALIISTGVLAGLCGPLLLTLM) threads the bilayer. Residues 243-257 (NACHRGFVSLKLAPP) lie on the Periplasmic side of the membrane. A helical membrane pass occupies residues 258–278 (WQLALGGLIVGLLSLFTPAVW). Residues 279–290 (GNGYSTVQSFLT) are Cytoplasmic-facing. The chain crosses the membrane as a helical span at residues 291–311 (APPLLMIIAGIFLCKLCAVLA). Residues 312–315 (SSGS) are Periplasmic-facing. Residues 316–336 (GAPGGVFTPTLFIGLAIGMLY) traverse the membrane as a helical segment. Topologically, residues 337-351 (GRSLGLWFPDGEEIT) are cytoplasmic. Residues 352 to 372 (LLLGLTGMATLLAATTHAPIM) traverse the membrane as a helical segment. Residues 373 to 379 (STLMICE) lie on the Periplasmic side of the membrane. A helical transmembrane segment spans residues 380-400 (MTGEYQLLPGLLIACVIASVI). The Cytoplasmic portion of the chain corresponds to 401–418 (SRTLHRDSIYRQHTAQHS).

This sequence belongs to the chloride channel (TC 2.A.49) family. ClcB subfamily.

Its subcellular location is the cell inner membrane. In terms of biological role, probably acts as an electrical shunt for an outwardly-directed proton pump that is linked to amino acid decarboxylation, as part of the extreme acid resistance (XAR) response. The protein is Voltage-gated ClC-type chloride channel ClcB (clcB) of Shigella flexneri.